A 267-amino-acid polypeptide reads, in one-letter code: tRNA (guanine-N(1)-)-methyltransferase (267 aa).

Residues G119 and 139-144 contribute to the S-adenosyl-L-methionine site; that span reads IGDYVL.

The protein belongs to the RNA methyltransferase TrmD family. In terms of assembly, homodimer.

Its subcellular location is the cytoplasm. The enzyme catalyses guanosine(37) in tRNA + S-adenosyl-L-methionine = N(1)-methylguanosine(37) in tRNA + S-adenosyl-L-homocysteine + H(+). In terms of biological role, specifically methylates guanosine-37 in various tRNAs. This Chromohalobacter salexigens (strain ATCC BAA-138 / DSM 3043 / CIP 106854 / NCIMB 13768 / 1H11) protein is tRNA (guanine-N(1)-)-methyltransferase.